The chain runs to 667 residues: Sterile alpha motif domain-containing protein 15 (667 aa).

A compositionally biased stretch (acidic residues) spans M1–P18. Disordered regions lie at residues M1–R108 and S147–K424. Basic and acidic residues-rich tracts occupy residues E19–Q53, I84–P93, E187–T196, and T228–E266. Positions A268–Q277 are enriched in acidic residues. Basic and acidic residues-rich tracts occupy residues M284–D314, E322–E338, E346–N364, and P381–K422. An SAM domain is found at W538 to I601.

The chain is Sterile alpha motif domain-containing protein 15 (SAMD15) from Macaca fascicularis (Crab-eating macaque).